The sequence spans 30 residues: Unknown protein from spot 365 of 2D-PAGE of etiolated coleoptile (30 aa).

It belongs to the zinc-containing alcohol dehydrogenase family.

This is Unknown protein from spot 365 of 2D-PAGE of etiolated coleoptile from Zea mays (Maize).